Reading from the N-terminus, the 416-residue chain is UDP-N-acetylglucosamine 1-carboxyvinyltransferase (416 aa).

22–23 (KN) is a phosphoenolpyruvate binding site. Residue Arg-92 coordinates UDP-N-acetyl-alpha-D-glucosamine. Cys-116 (proton donor) is an active-site residue. At Cys-116 the chain carries 2-(S-cysteinyl)pyruvic acid O-phosphothioketal. UDP-N-acetyl-alpha-D-glucosamine is bound by residues 121 to 125 (RPVDQ), Asp-304, and Ile-326.

Belongs to the EPSP synthase family. MurA subfamily.

The protein resides in the cytoplasm. It catalyses the reaction phosphoenolpyruvate + UDP-N-acetyl-alpha-D-glucosamine = UDP-N-acetyl-3-O-(1-carboxyvinyl)-alpha-D-glucosamine + phosphate. It functions in the pathway cell wall biogenesis; peptidoglycan biosynthesis. Its function is as follows. Cell wall formation. Adds enolpyruvyl to UDP-N-acetylglucosamine. In Aromatoleum aromaticum (strain DSM 19018 / LMG 30748 / EbN1) (Azoarcus sp. (strain EbN1)), this protein is UDP-N-acetylglucosamine 1-carboxyvinyltransferase.